Consider the following 460-residue polypeptide: Bifunctional protein GlmU (460 aa).

The interval 1-229 (MSNYAIILAA…FEESLGVNDR (229 aa)) is pyrophosphorylase. Residues 8–11 (LAAG), lysine 22, glutamine 72, and 77–78 (GT) each bind UDP-N-acetyl-alpha-D-glucosamine. Aspartate 102 is a binding site for Mg(2+). UDP-N-acetyl-alpha-D-glucosamine is bound by residues glycine 139, glutamate 154, asparagine 169, and asparagine 227. Residue asparagine 227 participates in Mg(2+) binding. The interval 230–250 (VALATAEDVMRRRINKTHMIN) is linker. Residues 251–460 (GVTFQNPNAT…KKPHHPSQQK (210 aa)) form an N-acetyltransferase region. Positions 332 and 350 each coordinate UDP-N-acetyl-alpha-D-glucosamine. Catalysis depends on histidine 362, which acts as the Proton acceptor. Residues tyrosine 365 and asparagine 376 each coordinate UDP-N-acetyl-alpha-D-glucosamine. Residues alanine 379, 385–386 (NY), serine 404, alanine 422, and arginine 439 each bind acetyl-CoA.

The protein in the N-terminal section; belongs to the N-acetylglucosamine-1-phosphate uridyltransferase family. In the C-terminal section; belongs to the transferase hexapeptide repeat family. Homotrimer. The cofactor is Mg(2+).

The protein resides in the cytoplasm. It carries out the reaction alpha-D-glucosamine 1-phosphate + acetyl-CoA = N-acetyl-alpha-D-glucosamine 1-phosphate + CoA + H(+). The enzyme catalyses N-acetyl-alpha-D-glucosamine 1-phosphate + UTP + H(+) = UDP-N-acetyl-alpha-D-glucosamine + diphosphate. It participates in nucleotide-sugar biosynthesis; UDP-N-acetyl-alpha-D-glucosamine biosynthesis; N-acetyl-alpha-D-glucosamine 1-phosphate from alpha-D-glucosamine 6-phosphate (route II): step 2/2. Its pathway is nucleotide-sugar biosynthesis; UDP-N-acetyl-alpha-D-glucosamine biosynthesis; UDP-N-acetyl-alpha-D-glucosamine from N-acetyl-alpha-D-glucosamine 1-phosphate: step 1/1. The protein operates within bacterial outer membrane biogenesis; LPS lipid A biosynthesis. Functionally, catalyzes the last two sequential reactions in the de novo biosynthetic pathway for UDP-N-acetylglucosamine (UDP-GlcNAc). The C-terminal domain catalyzes the transfer of acetyl group from acetyl coenzyme A to glucosamine-1-phosphate (GlcN-1-P) to produce N-acetylglucosamine-1-phosphate (GlcNAc-1-P), which is converted into UDP-GlcNAc by the transfer of uridine 5-monophosphate (from uridine 5-triphosphate), a reaction catalyzed by the N-terminal domain. This chain is Bifunctional protein GlmU, found in Streptococcus thermophilus (strain ATCC BAA-491 / LMD-9).